The chain runs to 106 residues: NADH dehydrogenase [ubiquinone] 1 alpha subcomplex subunit 8-B (106 aa).

At Ser2 the chain carries N-acetylserine. 2 consecutive CHCH domains span residues 26–67 (GMRC…LKDL) and 68–106 (HQKCQKEMDDYVGCMYYYTNEFDLCRKEQEAFEKVCPLK). Short sequence motifs (cx9C motif) lie at residues 29–39 (CMPENVAFLKC), 49–59 (CLDKGRDVTRC), and 71–81 (CQKEMDDYVGC). 4 disulfide bridges follow: Cys29-Cys59, Cys39-Cys49, Cys71-Cys103, and Cys81-Cys92. The Cx10C motif signature appears at 92 to 103 (CRKEQEAFEKVC).

It belongs to the complex I NDUFA8 subunit family. In terms of assembly, complex I is composed of at least 49 different subunits.

It localises to the mitochondrion. It is found in the mitochondrion intermembrane space. Functionally, accessory subunit of the mitochondrial membrane respiratory chain NADH dehydrogenase (Complex I), that is believed not to be involved in catalysis. Complex I functions in the transfer of electrons from NADH to the respiratory chain. The immediate electron acceptor for the enzyme is believed to be ubiquinone. This is NADH dehydrogenase [ubiquinone] 1 alpha subcomplex subunit 8-B from Arabidopsis thaliana (Mouse-ear cress).